The primary structure comprises 398 residues: uncharacterized protein (398 aa).

A helical transmembrane segment spans residues 88–108; it reads IGFTIGFAIFFILLFLLSNMV.

To B.megaterium SpoIV.

It localises to the cell membrane. This is an uncharacterized protein from Bacillus subtilis (strain 168).